Here is a 251-residue protein sequence, read N- to C-terminus: Ubiquinone/menaquinone biosynthesis C-methyltransferase UbiE (251 aa).

S-adenosyl-L-methionine contacts are provided by residues threonine 74, aspartate 95, and 123 to 124 (NA).

The protein belongs to the class I-like SAM-binding methyltransferase superfamily. MenG/UbiE family.

It catalyses the reaction a 2-demethylmenaquinol + S-adenosyl-L-methionine = a menaquinol + S-adenosyl-L-homocysteine + H(+). It carries out the reaction a 2-methoxy-6-(all-trans-polyprenyl)benzene-1,4-diol + S-adenosyl-L-methionine = a 5-methoxy-2-methyl-3-(all-trans-polyprenyl)benzene-1,4-diol + S-adenosyl-L-homocysteine + H(+). Its pathway is quinol/quinone metabolism; menaquinone biosynthesis; menaquinol from 1,4-dihydroxy-2-naphthoate: step 2/2. It functions in the pathway cofactor biosynthesis; ubiquinone biosynthesis. Methyltransferase required for the conversion of demethylmenaquinol (DMKH2) to menaquinol (MKH2) and the conversion of 2-polyprenyl-6-methoxy-1,4-benzoquinol (DDMQH2) to 2-polyprenyl-3-methyl-6-methoxy-1,4-benzoquinol (DMQH2). This chain is Ubiquinone/menaquinone biosynthesis C-methyltransferase UbiE, found in Shewanella pealeana (strain ATCC 700345 / ANG-SQ1).